Reading from the N-terminus, the 116-residue chain is Large ribosomal subunit protein uL18 (116 aa).

This sequence belongs to the universal ribosomal protein uL18 family. Part of the 50S ribosomal subunit; part of the 5S rRNA/L5/L18/L25 subcomplex. Contacts the 5S and 23S rRNAs.

Functionally, this is one of the proteins that bind and probably mediate the attachment of the 5S RNA into the large ribosomal subunit, where it forms part of the central protuberance. This chain is Large ribosomal subunit protein uL18, found in Mycoplasma capricolum subsp. capricolum (strain California kid / ATCC 27343 / NCTC 10154).